Here is a 335-residue protein sequence, read N- to C-terminus: Methionine import ATP-binding protein MetN (335 aa).

The ABC transporter domain maps to I2–V241. G38 to S45 lines the ATP pocket.

It belongs to the ABC transporter superfamily. Methionine importer (TC 3.A.1.24) family. The complex is composed of two ATP-binding proteins (MetN), two transmembrane proteins (MetI) and a solute-binding protein (MetQ).

The protein resides in the cell inner membrane. It carries out the reaction L-methionine(out) + ATP + H2O = L-methionine(in) + ADP + phosphate + H(+). The catalysed reaction is D-methionine(out) + ATP + H2O = D-methionine(in) + ADP + phosphate + H(+). In terms of biological role, part of the ABC transporter complex MetNIQ involved in methionine import. Responsible for energy coupling to the transport system. This is Methionine import ATP-binding protein MetN from Xanthomonas oryzae pv. oryzae (strain MAFF 311018).